The chain runs to 492 residues: MDQPSNGFAAGGLFLRHIDGQNASPPSVIVIGGGISGIAAARALSNASFKVTLLESRDRLGGRVHTDYSFGCPIDMGASWLHGVCNENSLAPLIRLLGLRLYRTSGDNSVLYDHDLESYALFDKDGRQVPQEIVTKVGETFEKILKETVKVRAEHEDDMPLIQAISIVLDRNPHLKLDGLQYEVLQWCICRLEAWFATDVDNISLKNWDQEHVLTGGHGLMVHGYDPVIKALAQDLDIHLNHRVTKIIQRYNKTIVCVEDGTSFVADAAIITVPLGVLKANIIKFEPELPDWKLSSISDLGIGIENKIALRFNSVFWPNVEVLGRVAPTSNACGYFLNLHKATGHPVLVCMVAGRFAYEFEKLSDEESVNFVMSQLKKMLPGATEPVQYLVSRWGTDPNSLGSYSCDLVGKPADLYERFCAPVGNLFFAGEAACIDHSGSVHGAYSSGIVAAEDCRRHLSTQLGISDLFQVGKIIMREEMTEVMVPFQISRL.

Positions 55, 63, 244, and 431 each coordinate FAD. A Microbody targeting signal motif is present at residues serine 490–leucine 492.

The protein belongs to the flavin monoamine oxidase family. Requires FAD as cofactor. Widely expressed.

The protein localises to the peroxisome. The catalysed reaction is spermine + O2 + H2O = 3-aminopropanal + spermidine + H2O2. The enzyme catalyses norspermine + O2 + H2O = norspermidine + 3-aminopropanal + H2O2. It carries out the reaction thermospermine + O2 + H2O = 3-aminopropanal + spermidine + H2O2. It participates in amine and polyamine degradation; spermine degradation. Its function is as follows. Flavoenzyme involved in polyamine back-conversion. Catalyzes the oxidation of the secondary amino group of polyamines, such as spermine. Substrate preference is spermine &gt; thermospermine &gt; norspermine. No activity detected when putrescine, spermidine or N(1)-acetylspermidine are used as substrates. Plays an important role in the regulation of polyamine intracellular concentration. May play a role in producing hydrogen peroxide during seed germination. This Oryza sativa subsp. japonica (Rice) protein is Polyamine oxidase 5.